The chain runs to 223 residues: Uracil-DNA glycosylase (223 aa).

Catalysis depends on D67, which acts as the Proton acceptor.

It belongs to the uracil-DNA glycosylase (UDG) superfamily. UNG family.

Its subcellular location is the cytoplasm. The catalysed reaction is Hydrolyzes single-stranded DNA or mismatched double-stranded DNA and polynucleotides, releasing free uracil.. Excises uracil residues from the DNA which can arise as a result of misincorporation of dUMP residues by DNA polymerase or due to deamination of cytosine. The polypeptide is Uracil-DNA glycosylase (Borreliella burgdorferi (strain ZS7) (Borrelia burgdorferi)).